The chain runs to 95 residues: ESAT-6-like protein EsxC (95 aa).

Belongs to the WXG100 family. ESAT-6 subfamily.

Its subcellular location is the secreted. In Mycolicibacterium paratuberculosis (strain ATCC BAA-968 / K-10) (Mycobacterium paratuberculosis), this protein is ESAT-6-like protein EsxC.